Consider the following 768-residue polypeptide: UPF0313 protein VV1_2212 (768 aa).

One can recognise a Radical SAM core domain in the interval 363-640 (AYDMIKTSVN…LHKALLRYHD (278 aa)). The [4Fe-4S] cluster site is built by C377, C381, and C384. The tract at residues 674–768 (DARTPAQRRK…GGRNQPSRAR (95 aa)) is disordered. Residues 679 to 689 (AQRRKSGRHGA) are compositionally biased toward basic residues. Polar residues predominate over residues 719 to 731 (GGQSNSAPSRSGS).

This sequence belongs to the UPF0313 family. [4Fe-4S] cluster serves as cofactor.

The sequence is that of UPF0313 protein VV1_2212 from Vibrio vulnificus (strain CMCP6).